Here is a 201-residue protein sequence, read N- to C-terminus: Small ribosomal subunit protein uS4c (201 aa).

The tract at residues 15–44 is disordered; the sequence is LGALPGLTSKRPKTGNDLKNQSRSGKKSQY. One can recognise an S4 RNA-binding domain in the interval 89–150; it reads MRLDNILFRL…EKKSRTLIQN (62 aa).

This sequence belongs to the universal ribosomal protein uS4 family. In terms of assembly, part of the 30S ribosomal subunit. Contacts protein S5. The interaction surface between S4 and S5 is involved in control of translational fidelity.

It localises to the plastid. The protein resides in the chloroplast. One of the primary rRNA binding proteins, it binds directly to 16S rRNA where it nucleates assembly of the body of the 30S subunit. Functionally, with S5 and S12 plays an important role in translational accuracy. The polypeptide is Small ribosomal subunit protein uS4c (rps4) (Cucumis sativus (Cucumber)).